The chain runs to 257 residues: Imidazole glycerol phosphate synthase subunit HisF (257 aa).

Residues Asp-11 and Asp-130 contribute to the active site.

The protein belongs to the HisA/HisF family. Heterodimer of HisH and HisF.

The protein resides in the cytoplasm. The catalysed reaction is 5-[(5-phospho-1-deoxy-D-ribulos-1-ylimino)methylamino]-1-(5-phospho-beta-D-ribosyl)imidazole-4-carboxamide + L-glutamine = D-erythro-1-(imidazol-4-yl)glycerol 3-phosphate + 5-amino-1-(5-phospho-beta-D-ribosyl)imidazole-4-carboxamide + L-glutamate + H(+). It functions in the pathway amino-acid biosynthesis; L-histidine biosynthesis; L-histidine from 5-phospho-alpha-D-ribose 1-diphosphate: step 5/9. IGPS catalyzes the conversion of PRFAR and glutamine to IGP, AICAR and glutamate. The HisF subunit catalyzes the cyclization activity that produces IGP and AICAR from PRFAR using the ammonia provided by the HisH subunit. This Proteus mirabilis (strain HI4320) protein is Imidazole glycerol phosphate synthase subunit HisF.